The following is a 175-amino-acid chain: uncharacterized protein (175 aa).

This is an uncharacterized protein from Treponema pallidum (strain Nichols).